We begin with the raw amino-acid sequence, 329 residues long: GTP 3',8-cyclase (329 aa).

A Radical SAM core domain is found at 1 to 229 (MNQVDYLRIS…EGYVRGNGPA (229 aa)). GTP is bound at residue R8. [4Fe-4S] cluster contacts are provided by C15 and C19. Position 21 (Y21) interacts with S-adenosyl-L-methionine. Position 22 (C22) interacts with [4Fe-4S] cluster. R60 is a GTP binding site. G64 contacts S-adenosyl-L-methionine. Residue T91 participates in GTP binding. S115 serves as a coordination point for S-adenosyl-L-methionine. K155 is a GTP binding site. Residue M189 coordinates S-adenosyl-L-methionine. The [4Fe-4S] cluster site is built by C252 and C255. 257–259 (RVR) contacts GTP. Residue C269 coordinates [4Fe-4S] cluster.

It belongs to the radical SAM superfamily. MoaA family. Monomer and homodimer. Requires [4Fe-4S] cluster as cofactor.

The enzyme catalyses GTP + AH2 + S-adenosyl-L-methionine = (8S)-3',8-cyclo-7,8-dihydroguanosine 5'-triphosphate + 5'-deoxyadenosine + L-methionine + A + H(+). It functions in the pathway cofactor biosynthesis; molybdopterin biosynthesis. Its function is as follows. Catalyzes the cyclization of GTP to (8S)-3',8-cyclo-7,8-dihydroguanosine 5'-triphosphate. This Cyanothece sp. (strain PCC 7425 / ATCC 29141) protein is GTP 3',8-cyclase.